Consider the following 849-residue polypeptide: A-kinase anchor protein 4 (849 aa).

Positions 1-188 are excised as a propeptide; the sequence is MIAYCGTTTM…MAASKNTNNN (188 aa). Phosphoserine occurs at positions 96, 130, 190, and 204. The segment covering 183–205 has biased composition (polar residues); that stretch reads KNTNNNQSPSNPATKSPSNQRSV. Residues 183–210 are disordered; sequence KNTNNNQSPSNPATKSPSNQRSVATPEG. A Phosphothreonine modification is found at Thr207. Ser213, Ser226, and Ser271 each carry phosphoserine. Residues 219–232 are PKA-RI and PKA-RII subunit binding domain; the sequence is FYVNRLSSLVIQMA. Tyr301 bears the Phosphotyrosine mark. Residues Ser302, Ser341, Ser431, Ser442, Ser444, Ser463, Ser492, Ser497, and Ser504 each carry the phosphoserine modification. The segment at 335 to 344 is PKA-RI-alpha subunit binding domain; the sequence is YANQVASDMM. Thr506 carries the phosphothreonine modification. At Ser538 the chain carries Phosphoserine. Phosphoserine; by STK33 is present on Ser583. Ser628, Ser633, Ser652, and Ser702 each carry phosphoserine.

The protein belongs to the AKAP110 family. As to quaternary structure, interacts with PRKAR1A and PRKAR2A. Interacts with ENO4. Interacts with QRICH2. In terms of processing, phosphorylated by STK33 during sperm flagella assembly. Expressed in the fibrous sheath of spermatozoa (at protein level). Expressed in step 1 to step 6 spermatids, abundance then increases during steps 8 to 12, abundance decreases thereafter.

The protein localises to the cell projection. The protein resides in the cilium. Its subcellular location is the flagellum. In terms of biological role, major structural component of sperm fibrous sheath. Plays a role in sperm motility. The protein is A-kinase anchor protein 4 of Mus musculus (Mouse).